The following is a 364-amino-acid chain: Mannose-1-phosphate guanyltransferase (364 aa).

Belongs to the transferase hexapeptide repeat family.

It localises to the cytoplasm. It carries out the reaction alpha-D-mannose 1-phosphate + GTP + H(+) = GDP-alpha-D-mannose + diphosphate. Its pathway is nucleotide-sugar biosynthesis; GDP-alpha-D-mannose biosynthesis; GDP-alpha-D-mannose from alpha-D-mannose 1-phosphate (GTP route): step 1/1. Its function is as follows. Involved in cell wall synthesis where it is required for glycosylation. Involved in cell cycle progression through cell-size checkpoint. The protein is Mannose-1-phosphate guanyltransferase (mpg1) of Emericella nidulans (strain FGSC A4 / ATCC 38163 / CBS 112.46 / NRRL 194 / M139) (Aspergillus nidulans).